Here is a 548-residue protein sequence, read N- to C-terminus: MAAKEVRFSDDARVKMLAGVNILANAVKVTLGPKGRNVVLDKSFGAPTITKDGVSVAKEIELEDKFENMGAQMVKEVASKANDEAGDGTTTATVLAQSIVTEGLKAVAAGMNPMDLKRGIDKAVIAAVEQLKTLSVPCADSKAIAQVGTISANSDTEVGDLIAEAMDKVGKEGVITVEEGQSLQNELEVVEGMQFDRGYLSPYFMNNQENGTVELDSPFILLVDKKVSNIRELLPTLEAVAKASKPLLIIAEDVEGEALATLVVNNMRGIVKVAAVKAPGFGDRRKAMLQDLATLTGGTVISEEIGLELEKVTLEDLGTAKRVVINKDNTTVVDGAGEEEAIQGRVAQIRAQIEESSSDYDKEKLQERLAKLAGGVAVIKVGAATEVEMKEKKDRVEDALHATRAAVEEGVVAGGGVALVRAASKIVDLQGDNEDQTHGIKLLLRAMESPMRQIAANAGAEASVVTNAVKNGADNYGYNAGNDTYGDMLEMGILDPTKVTRSALQFAASIASLMITTEAMIAEAPKEDAPAMPDMGGMGGMGGMGGMM.

ATP is bound by residues 30–33 (TLGP), K51, 87–91 (DGTTT), G415, and D495.

This sequence belongs to the chaperonin (HSP60) family. As to quaternary structure, forms a cylinder of 14 subunits composed of two heptameric rings stacked back-to-back. Interacts with the co-chaperonin GroES.

It is found in the cytoplasm. The catalysed reaction is ATP + H2O + a folded polypeptide = ADP + phosphate + an unfolded polypeptide.. Functionally, together with its co-chaperonin GroES, plays an essential role in assisting protein folding. The GroEL-GroES system forms a nano-cage that allows encapsulation of the non-native substrate proteins and provides a physical environment optimized to promote and accelerate protein folding. In Pseudoalteromonas atlantica (strain T6c / ATCC BAA-1087), this protein is Chaperonin GroEL.